We begin with the raw amino-acid sequence, 113 residues long: MNTVRVTFLLVFVLAVSLGQADKDENRMEMQEKTEQGKSYLDFAENLLLQKLEELEAKPLEEDSEESRNSRQKRCIGEGVPCDENDPRCCSGLVCLKPTLHGIWYKSYYCYKK.

A signal peptide spans 1 to 21 (MNTVRVTFLLVFVLAVSLGQA). Positions 22–74 (DKDENRMEMQEKTEQGKSYLDFAENLLLQKLEELEAKPLEEDSEESRNSRQKR) are excised as a propeptide. A compositionally biased stretch (basic and acidic residues) spans 57–69 (AKPLEEDSEESRN). Residues 57 to 83 (AKPLEEDSEESRNSRQKRCIGEGVPCD) are disordered. 3 disulfide bridges follow: C75–C90, C82–C95, and C89–C110.

This sequence belongs to the neurotoxin 14 (magi-1) family. 01 (HNTX-16) subfamily. As to expression, expressed by the venom gland.

The protein resides in the secreted. Its function is as follows. Probable ion channel inhibitor. This chain is U11-theraphotoxin-Hhn1a, found in Cyriopagopus hainanus (Chinese bird spider).